Consider the following 498-residue polypeptide: Pyridine nucleotide-disulfide oxidoreductase domain-containing protein 1 (498 aa).

M1 is modified (N-acetylmethionine).

Belongs to the class-I pyridine nucleotide-disulfide oxidoreductase family. PYROXD1 subfamily. Requires FAD as cofactor.

The protein localises to the nucleus. The protein resides in the cytoplasm. Its subcellular location is the myofibril. It localises to the sarcomere. In terms of biological role, probable FAD-dependent oxidoreductase; involved in the cellular oxidative stress response. Required for normal sarcomere structure and muscle fiber integrity. The chain is Pyridine nucleotide-disulfide oxidoreductase domain-containing protein 1 (Pyroxd1) from Rattus norvegicus (Rat).